Reading from the N-terminus, the 373-residue chain is Histidinol-phosphate aminotransferase (373 aa).

Lys-230 bears the N6-(pyridoxal phosphate)lysine mark.

This sequence belongs to the class-II pyridoxal-phosphate-dependent aminotransferase family. Histidinol-phosphate aminotransferase subfamily. As to quaternary structure, homodimer. It depends on pyridoxal 5'-phosphate as a cofactor.

It carries out the reaction L-histidinol phosphate + 2-oxoglutarate = 3-(imidazol-4-yl)-2-oxopropyl phosphate + L-glutamate. It participates in amino-acid biosynthesis; L-histidine biosynthesis; L-histidine from 5-phospho-alpha-D-ribose 1-diphosphate: step 7/9. In Synechococcus elongatus (strain ATCC 33912 / PCC 7942 / FACHB-805) (Anacystis nidulans R2), this protein is Histidinol-phosphate aminotransferase.